Reading from the N-terminus, the 43-residue chain is Putative inhibitor of glucose uptake transporter SgrT (43 aa).

In terms of biological role, acts to promote recovery from glucose-phosphate stress due to intracellular accumulation of glucose-6-phosphate caused by disruption of glycolytic flux or in the presence of (toxic) non-metabolizable glucose phosphate analogs. It may do so by inhibiting the transporter activity for glucose uptake (PtsG) as cells that overexpress this protein do not seem to import glucose although they have nearly wild-type levels of PtsG. In Escherichia coli (strain K12), this protein is Putative inhibitor of glucose uptake transporter SgrT (sgrT).